A 186-amino-acid polypeptide reads, in one-letter code: dTTP/UTP pyrophosphatase (186 aa).

The active-site Proton acceptor is the D67.

It belongs to the Maf family. YhdE subfamily. It depends on a divalent metal cation as a cofactor.

The protein localises to the cytoplasm. The catalysed reaction is dTTP + H2O = dTMP + diphosphate + H(+). It carries out the reaction UTP + H2O = UMP + diphosphate + H(+). Functionally, nucleoside triphosphate pyrophosphatase that hydrolyzes dTTP and UTP. May have a dual role in cell division arrest and in preventing the incorporation of modified nucleotides into cellular nucleic acids. This is dTTP/UTP pyrophosphatase from Carboxydothermus hydrogenoformans (strain ATCC BAA-161 / DSM 6008 / Z-2901).